Reading from the N-terminus, the 89-residue chain is MAKKSVIARNEKRKRLVEQYAAKREELLKAGDYEALRKLPRDSSATRVRNRCVLTGRGRGVYEKFGLCRHMFRKLALEGKIPGVKKASW.

Belongs to the universal ribosomal protein uS14 family. In terms of assembly, part of the 30S ribosomal subunit. Contacts proteins S3 and S10.

Binds 16S rRNA, required for the assembly of 30S particles and may also be responsible for determining the conformation of the 16S rRNA at the A site. The sequence is that of Small ribosomal subunit protein uS14 from Chlorobium luteolum (strain DSM 273 / BCRC 81028 / 2530) (Pelodictyon luteolum).